The following is a 2082-amino-acid chain: Autophagy-related protein 2 (2082 aa).

10 disordered regions span residues 108–130 (SADQDTHRSPTDDTGDDHVLPNP), 144–175 (EEKEELQAAISSQSQVLQHTSTSSSDDEEEFG), 285–343 (TAPP…VPEA), 365–435 (TEET…STFN), 462–527 (TGSF…RDGD), 580–636 (RSQC…SFES), 662–702 (SRDG…RSQD), 912–943 (SGVKAQKEPPKRSRGVHFEPSPPPVKESRQPS), 1435–1454 (DAASPEHAAEGSSDLAQPAN), and 2062–2082 (GAGNTLDPSNRRKMEDKYKRH). Residues 111–126 (QDTHRSPTDDTGDDHV) show a composition bias toward basic and acidic residues. Polar residues-rich tracts occupy residues 152–162 (AISSQSQVLQH) and 311–329 (PELNPSDSNPGLGMTQSTI). Composition is skewed to basic and acidic residues over residues 397 to 430 (IDSHLHDEDLERSVNLPRDDAPSAREEDTPRLHD) and 489 to 500 (QHAEEPQHEVRA). Over residues 503 to 522 (SGSQPAPPSEEGSSSSTSNS) the composition is skewed to low complexity. Basic and acidic residues-rich tracts occupy residues 588 to 597 (NRTRDEKDET), 622 to 633 (RTAHSEATDKGS), and 690 to 702 (HSERRSYPKRSQD). The span at 2070 to 2082 (SNRRKMEDKYKRH) shows a compositional bias: basic and acidic residues.

It belongs to the ATG2 family.

The protein localises to the preautophagosomal structure membrane. It is found in the endoplasmic reticulum membrane. The catalysed reaction is a 1,2-diacyl-sn-glycero-3-phosphocholine(in) = a 1,2-diacyl-sn-glycero-3-phosphocholine(out). It carries out the reaction a 1,2-diacyl-sn-glycero-3-phospho-L-serine(in) = a 1,2-diacyl-sn-glycero-3-phospho-L-serine(out). It catalyses the reaction a 1,2-diacyl-sn-glycero-3-phosphoethanolamine(in) = a 1,2-diacyl-sn-glycero-3-phosphoethanolamine(out). Lipid transfer protein required for autophagosome completion and peroxisome degradation. Tethers the edge of the isolation membrane (IM) to the endoplasmic reticulum (ER) and mediates direct lipid transfer from ER to IM for IM expansion. Atg2 binds to the ER exit site (ERES), which is the membrane source for autophagosome formation, using basic residues in its N-terminal region (NR) and to the expanding edge of the IM through its C-terminal region. The latter binding is assisted by an atg18-PtdIns3P interaction. Atg2 then extracts phospholipids from the membrane source using its NR and transfers them to atg9 to the IM through its predicted beta-sheet-rich structure for membrane expansion. The polypeptide is Autophagy-related protein 2 (atg2) (Aspergillus terreus (strain NIH 2624 / FGSC A1156)).